A 272-amino-acid polypeptide reads, in one-letter code: Shikimate dehydrogenase (NADP(+)) (272 aa).

Shikimate contacts are provided by residues 14-16 and T61; that span reads SKS. The active-site Proton acceptor is the K65. NADP(+) is bound at residue E77. Shikimate-binding residues include N86 and D102. NADP(+) is bound by residues 126–130, 150–155, and M213; these read GAGGA and NRTFSK. Position 215 (Y215) interacts with shikimate. G237 lines the NADP(+) pocket.

Belongs to the shikimate dehydrogenase family. As to quaternary structure, homodimer.

It catalyses the reaction shikimate + NADP(+) = 3-dehydroshikimate + NADPH + H(+). It functions in the pathway metabolic intermediate biosynthesis; chorismate biosynthesis; chorismate from D-erythrose 4-phosphate and phosphoenolpyruvate: step 4/7. In terms of biological role, involved in the biosynthesis of the chorismate, which leads to the biosynthesis of aromatic amino acids. Catalyzes the reversible NADPH linked reduction of 3-dehydroshikimate (DHSA) to yield shikimate (SA). This chain is Shikimate dehydrogenase (NADP(+)), found in Psychromonas ingrahamii (strain DSM 17664 / CCUG 51855 / 37).